Here is a 402-residue protein sequence, read N- to C-terminus: C2H2 finger domain transcription factor CON7 (402 aa).

Positions Met1–Arg247 are disordered. Composition is skewed to polar residues over residues Leu19–Gly49 and Cys72–Thr86. The span at Ser87 to Gln98 shows a compositional bias: low complexity. 2 stretches are compositionally biased toward polar residues: residues Glu99–Ser116 and Ala125–Asp151. The C2H2-type zinc-finger motif lies at Tyr256–His282. The stretch at Glu289–Gln323 forms a coiled coil. Positions Lys302 to Arg317 are enriched in basic and acidic residues. A disordered region spans residues Lys302–Arg402. 3 stretches are compositionally biased toward polar residues: residues Ser322–Gly341, Ala363–Pro373, and Gly392–Arg402.

It is found in the nucleus. In terms of biological role, transcription factor that plays a central role in appressorium formation and pathogenicity. Required for the expression of a large set of genes including factors that might play a role in membrane metabolism and ergosterol biosynthesis, the chitin-binding protein CBP1,as well as CHS7 that is essential for normal pathogenic development. The protein is C2H2 finger domain transcription factor CON7 of Pyricularia oryzae (strain 70-15 / ATCC MYA-4617 / FGSC 8958) (Rice blast fungus).